The primary structure comprises 200 residues: ATP-dependent Clp protease proteolytic subunit 3 (200 aa).

S101 acts as the Nucleophile in catalysis. H126 is an active-site residue.

The protein belongs to the peptidase S14 family. Fourteen ClpP subunits assemble into 2 heptameric rings which stack back to back to give a disk-like structure with a central cavity, resembling the structure of eukaryotic proteasomes.

The protein resides in the cytoplasm. It carries out the reaction Hydrolysis of proteins to small peptides in the presence of ATP and magnesium. alpha-casein is the usual test substrate. In the absence of ATP, only oligopeptides shorter than five residues are hydrolyzed (such as succinyl-Leu-Tyr-|-NHMec, and Leu-Tyr-Leu-|-Tyr-Trp, in which cleavage of the -Tyr-|-Leu- and -Tyr-|-Trp bonds also occurs).. Functionally, cleaves peptides in various proteins in a process that requires ATP hydrolysis. Has a chymotrypsin-like activity. Plays a major role in the degradation of misfolded proteins. In Synechococcus sp. (strain CC9902), this protein is ATP-dependent Clp protease proteolytic subunit 3.